We begin with the raw amino-acid sequence, 474 residues long: Trehalose-6-phosphate synthase (474 aa).

Residue Arg-10 participates in D-glucose 6-phosphate binding. Residue 22-23 (GG) participates in UDP-alpha-D-glucose binding. The D-glucose 6-phosphate site is built by Tyr-77 and Asp-131. The UDP-alpha-D-glucose site is built by Arg-263 and Lys-268. Arg-301 contacts D-glucose 6-phosphate. UDP-alpha-D-glucose-binding positions include Phe-340 and 366-370 (LVAKE).

The protein belongs to the glycosyltransferase 20 family. In terms of assembly, homotetramer.

It catalyses the reaction D-glucose 6-phosphate + UDP-alpha-D-glucose = alpha,alpha-trehalose 6-phosphate + UDP + H(+). It participates in glycan biosynthesis; trehalose biosynthesis. Probably involved in the osmoprotection via the biosynthesis of trehalose. Catalyzes the transfer of glucose from UDP-alpha-D-glucose (UDP-Glc) to D-glucose 6-phosphate (Glc-6-P) to form trehalose-6-phosphate. Acts with retention of the anomeric configuration of the UDP-sugar donor. The sequence is that of Trehalose-6-phosphate synthase from Escherichia coli O1:K1 / APEC.